A 126-amino-acid chain; its full sequence is Protein mmf2, mitochondrial (126 aa).

Belongs to the RutC family.

It is found in the mitochondrion. It localises to the cytoplasm. Functionally, plays a role in the maintenance of mitochondrial DNA. The chain is Protein mmf2, mitochondrial (mmf2) from Schizosaccharomyces pombe (strain 972 / ATCC 24843) (Fission yeast).